A 448-amino-acid chain; its full sequence is Phosphoglucosamine mutase (448 aa).

The active-site Phosphoserine intermediate is serine 100. Mg(2+) is bound by residues serine 100, aspartate 240, aspartate 242, and aspartate 244. Position 100 is a phosphoserine (serine 100).

The protein belongs to the phosphohexose mutase family. Mg(2+) is required as a cofactor. In terms of processing, activated by phosphorylation.

The catalysed reaction is alpha-D-glucosamine 1-phosphate = D-glucosamine 6-phosphate. In terms of biological role, catalyzes the conversion of glucosamine-6-phosphate to glucosamine-1-phosphate. The protein is Phosphoglucosamine mutase of Clostridium tetani (strain Massachusetts / E88).